The following is a 146-amino-acid chain: Protein LDOC1 (146 aa).

Belongs to the LDOC1 family. In terms of assembly, interacts with NOD2. In terms of tissue distribution, ubiquitously expressed with high levels in brain ant thyroid and low expression in placenta, liver and leukocytes. Expressed as well in six of the seven human breast cancer cell lines examined.

It localises to the nucleus. In terms of biological role, may have an important role in the development and/or progression of some cancers. The polypeptide is Protein LDOC1 (LDOC1) (Homo sapiens (Human)).